The primary structure comprises 115 residues: Large ribosomal subunit protein bL20 (115 aa).

The protein belongs to the bacterial ribosomal protein bL20 family.

Its function is as follows. Binds directly to 23S ribosomal RNA and is necessary for the in vitro assembly process of the 50S ribosomal subunit. It is not involved in the protein synthesizing functions of that subunit. In Prochlorococcus marinus (strain AS9601), this protein is Large ribosomal subunit protein bL20.